Reading from the N-terminus, the 115-residue chain is Skin calcitonin gene-related peptide (115 aa).

The N-terminal stretch at Met1–Ala25 is a signal peptide. The propeptide at Ala26–Arg69 is removed in mature form by a carboxypeptidase. The cysteines at positions 71 and 76 are disulfide-linked. Position 106 is a phenylalanine amide (Phe106). Residues Gly107–Val115 constitute a propeptide, removed in mature form by an endoprotease.

Skin, intestine and brain.

It is found in the secreted. Functionally, CGRP induces vasodilation. It dilates a variety of vessels including the coronary, cerebral and systemic vasculature. Its abundance in the CNS also points toward a neurotransmitter or neuromodulator role. This is Skin calcitonin gene-related peptide from Phyllomedusa bicolor (Two-colored leaf frog).